The chain runs to 403 residues: Accessory Sec system protein translocase subunit SecY2 (403 aa).

The next 10 helical transmembrane spans lie at 17–37, 63–83, 105–125, 131–151, 157–177, 186–206, 240–260, 276–296, 339–359, and 366–386; these read MLYTCFILFIYILGTNISIVS, LNIFTLGLVPWLTSMIILMLI, ILTLILSVIQSYFVIHEYVSK, DNIYLTILILVTGTMLLVWLA, YGIAGPMPIVMVSIIKSMMHQ, HIVIALLIILVIITLFILLFI, ITLMMSISAFVFLKSGIHFIL, FDSPVGISVYLVIQMLLGYFL, WFGSALVTVIIGIPLYFTLFV, and IYFSVQLIVLVYISINIAETI.

It belongs to the SecY/SEC61-alpha family. SecY2 subfamily. In terms of assembly, component of the accessory SecA2/SecY2 protein translocase complex required to export cell wall proteins. May form heterotrimers with SecE and SecG subunits.

Its subcellular location is the cell membrane. Its function is as follows. Part of the accessory SecA2/SecY2 system specifically required for export of possible cell wall proteins. The central subunit of a protein translocation channel. The chain is Accessory Sec system protein translocase subunit SecY2 from Staphylococcus aureus (strain N315).